The chain runs to 188 residues: Mitochondrial import inner membrane translocase subunit TIM23-2 (188 aa).

A run of 4 helical transmembrane segments spans residues 64-84, 112-131, 138-154, and 161-178; these read TGTA…ITGV, GNRI…GIVA, VWTS…VCRA, and AAVA…VVAG.

Belongs to the Tim17/Tim22/Tim23 family. Homomultimer. Component of the TIM17:23 complex at least composed of TIM23, TIM17 and TIM50. The complex interacts with the TIM44 component of the PAM complex. Also part of the NADH-ubiquinone oxidoreductase complex I. Interacts with OEP163, TIM17-2, TIM21, TIM50 and MPPA2. Expressed in roots and young cotyledons. Detected in leaves and flowers.

It localises to the mitochondrion inner membrane. Essential component of the TIM17:23 complex, a complex that mediates the translocation of transit peptide-containing proteins across the mitochondrial inner membrane. Links the inner and outer membranes. This chain is Mitochondrial import inner membrane translocase subunit TIM23-2 (TIM23-2), found in Arabidopsis thaliana (Mouse-ear cress).